The primary structure comprises 649 residues: Protein phosphatase Slingshot homolog 3 (649 aa).

Over residues 1–20 (MALVTVSRSPPASGHSTPVG) the composition is skewed to polar residues. The disordered stretch occupies residues 1 to 32 (MALVTVSRSPPASGHSTPVGPTQDRVVRRRGR). Alanine 2 is subject to N-acetylalanine. A phosphoserine mark is found at serine 9 and serine 38. Residues 49-90 (LQDGGDSNVASEADSEPMEEPSGEEQPTEDQTDKGQGLQSPW) form a disordered region. A compositionally biased stretch (acidic residues) spans 61 to 78 (ADSEPMEEPSGEEQPTED). The residue at position 88 (serine 88) is a Phosphoserine. The region spanning 266 to 321 (EKMEQAILAELWQVLDTSDLDSVTSKEIRQALELRLGCPLQQYRDFIDNQMLLLMA) is the DEK-C domain. The 142-residue stretch at 325-466 (RASRIFPHLY…LRTYQGILTA (142 aa)) folds into the Tyrosine-protein phosphatase domain. Cysteine 410 acts as the Phosphocysteine intermediate in catalysis. Composition is skewed to low complexity over residues 541–551 (LEPSESESTPE) and 608–627 (TRAF…GMSS). Disordered regions lie at residues 541–586 (LEPS…KGPW) and 608–649 (TRAF…EDKA). Over residues 639-649 (SVDDSREEDKA) the composition is skewed to basic and acidic residues.

The protein belongs to the protein-tyrosine phosphatase family. As to quaternary structure, does not bind to, or colocalize with, filamentous actin. Expressed in brain, small intestine and testis. Also expressed at lower levels in heart, kidney, liver, spleen and thymus.

The protein resides in the cytoplasm. The protein localises to the cytoskeleton. It localises to the nucleus. The enzyme catalyses O-phospho-L-tyrosyl-[protein] + H2O = L-tyrosyl-[protein] + phosphate. The catalysed reaction is O-phospho-L-seryl-[protein] + H2O = L-seryl-[protein] + phosphate. It catalyses the reaction O-phospho-L-threonyl-[protein] + H2O = L-threonyl-[protein] + phosphate. Its function is as follows. Protein phosphatase which may play a role in the regulation of actin filament dynamics. Can dephosphorylate and activate the actin binding/depolymerizing factor cofilin, which subsequently binds to actin filaments and stimulates their disassembly. The chain is Protein phosphatase Slingshot homolog 3 (Ssh3) from Mus musculus (Mouse).